The following is a 140-amino-acid chain: Nucleoside diphosphate kinase (140 aa).

Residues Lys9, Phe57, Arg85, Thr91, Arg102, and Asn112 each contribute to the ATP site. His115 functions as the Pros-phosphohistidine intermediate in the catalytic mechanism.

This sequence belongs to the NDK family. As to quaternary structure, homotetramer. Mg(2+) is required as a cofactor.

It is found in the cytoplasm. The enzyme catalyses a 2'-deoxyribonucleoside 5'-diphosphate + ATP = a 2'-deoxyribonucleoside 5'-triphosphate + ADP. The catalysed reaction is a ribonucleoside 5'-diphosphate + ATP = a ribonucleoside 5'-triphosphate + ADP. Its function is as follows. Major role in the synthesis of nucleoside triphosphates other than ATP. The ATP gamma phosphate is transferred to the NDP beta phosphate via a ping-pong mechanism, using a phosphorylated active-site intermediate. This chain is Nucleoside diphosphate kinase, found in Chlorobium limicola (strain DSM 245 / NBRC 103803 / 6330).